A 357-amino-acid polypeptide reads, in one-letter code: DNA replication and repair protein RecF (357 aa).

30-37 (GANGSGKT) is an ATP binding site.

It belongs to the RecF family.

Its subcellular location is the cytoplasm. In terms of biological role, the RecF protein is involved in DNA metabolism; it is required for DNA replication and normal SOS inducibility. RecF binds preferentially to single-stranded, linear DNA. It also seems to bind ATP. The polypeptide is DNA replication and repair protein RecF (Salmonella paratyphi B (strain ATCC BAA-1250 / SPB7)).